Reading from the N-terminus, the 445-residue chain is Histone acetyltransferase of the MYST family 2 (445 aa).

A compositionally biased stretch (polar residues) spans 1 to 23; the sequence is MGSSANTETNGNAPPPSSNQKPP. The tract at residues 1–58 is disordered; sequence MGSSANTETNGNAPPPSSNQKPPATNGVDGSHPPPPPLTPDQAIIESDPSKKRKMGML. The region spanning 60-118 is the Tudor-knot domain; sequence LEVGTRVMCRWRDGKHHPVKVIERRRIHNGGQNDYEYYVHYTEFNRRLDEWTQLDQLDL. The 272-residue stretch at 169–440 folds into the MYST-type HAT domain; it reads TKVKNISTIE…VDASKLIWTP (272 aa). The C2HC MYST-type zinc-finger motif lies at 202-227; it reads LFFCEFCLNFMKRKEQLQRHMRKCDL. N6-acetyllysine; by autocatalysis is present on K269. Acetyl-CoA-binding positions include 312-314 and 319-325; these read ILT and QRKGYGK. E345 acts as the Proton donor/acceptor in catalysis. S349 provides a ligand contact to acetyl-CoA.

The protein belongs to the MYST (SAS/MOZ) family. In terms of assembly, interacts with MRG1 and MRG2. Post-translationally, autoacetylation at Lys-269 is required for proper function. Expressed in cotyledons, leaves, stems, roots and, at higher levels in developing flowers, particularly in the anthers and gynoecia. Constitutively expressed in all tissues, predominantly in shoot apical meristem.

It is found in the nucleus. The catalysed reaction is L-lysyl-[protein] + acetyl-CoA = N(6)-acetyl-L-lysyl-[protein] + CoA + H(+). Histone acetyltransferase which may be involved in transcriptional activation. Acetylates 'Lys-5' of histone H4 (H4K5ac). Essential for gametophyte development. Negative regulator of flowering controlling the H4K5ac levels in the FLC chromatin. This is Histone acetyltransferase of the MYST family 2 from Arabidopsis thaliana (Mouse-ear cress).